The chain runs to 82 residues: Delta-conotoxin SVIE (82 aa).

Residues 1-22 (MKLTCVMIVAVLFLTTWTFVTA) form the signal peptide. Residues 23 to 51 (DDSRYGLKNLFPKARHEMKNPEASKLNKR) constitute a propeptide that is removed on maturation. Disulfide bonds link Cys-54-Cys-69, Cys-61-Cys-73, and Cys-68-Cys-77. The residue at position 65 (Pro-65) is a 4-hydroxyproline.

Belongs to the conotoxin O1 superfamily. As to expression, expressed by the venom duct.

The protein localises to the secreted. Its function is as follows. Delta-conotoxins bind to site 6 of voltage-gated sodium channels (Nav) and inhibit the inactivation process. Impairs rapid channel inactivation of Nav1.4/SCN4A (Kd=500 nM). Interacts with a conserved hydrophobic triad (YFV) in the domain-4 voltage sensor of sodium channels. In vivo, injection of both native or synthetic peptide induces twitching of back limbs, running in circles, and spastic paralysis. The protein is Delta-conotoxin SVIE (SO6) of Conus striatus (Striated cone).